The sequence spans 299 residues: GTP cyclohydrolase FolE2 (299 aa).

Belongs to the GTP cyclohydrolase IV family.

The enzyme catalyses GTP + H2O = 7,8-dihydroneopterin 3'-triphosphate + formate + H(+). The protein operates within cofactor biosynthesis; 7,8-dihydroneopterin triphosphate biosynthesis; 7,8-dihydroneopterin triphosphate from GTP: step 1/1. Functionally, converts GTP to 7,8-dihydroneopterin triphosphate. This Citrobacter koseri (strain ATCC BAA-895 / CDC 4225-83 / SGSC4696) protein is GTP cyclohydrolase FolE2.